We begin with the raw amino-acid sequence, 333 residues long: DNA-directed RNA polymerase subunit alpha (333 aa).

The tract at residues 1-234 (MQISVNEFLT…QQLAAFVDLK (234 aa)) is alpha N-terminal domain (alpha-NTD). Positions 248–333 (IDPILLRPVD…SLKKDDKATA (86 aa)) are alpha C-terminal domain (alpha-CTD).

The protein belongs to the RNA polymerase alpha chain family. As to quaternary structure, homodimer. The RNAP catalytic core consists of 2 alpha, 1 beta, 1 beta' and 1 omega subunit. When a sigma factor is associated with the core the holoenzyme is formed, which can initiate transcription.

The enzyme catalyses RNA(n) + a ribonucleoside 5'-triphosphate = RNA(n+1) + diphosphate. DNA-dependent RNA polymerase catalyzes the transcription of DNA into RNA using the four ribonucleoside triphosphates as substrates. The chain is DNA-directed RNA polymerase subunit alpha from Pseudomonas fluorescens (strain ATCC BAA-477 / NRRL B-23932 / Pf-5).